We begin with the raw amino-acid sequence, 465 residues long: Kynureninase (465 aa).

Position 1 is an N-acetylmethionine (Met-1). Pyridoxal 5'-phosphate-binding positions include Leu-137, Thr-138, 165–168 (FPSD), Ser-221, Asp-250, His-253, and Tyr-275. Lys-276 is modified (N6-(pyridoxal phosphate)lysine). Residues Trp-305 and Asn-333 each contribute to the pyridoxal 5'-phosphate site.

It belongs to the kynureninase family. In terms of assembly, homodimer. Requires pyridoxal 5'-phosphate as cofactor. As to expression, expressed in all tissues tested (heart, brain placenta, lung, liver, skeletal muscle, kidney and pancreas). Highest levels found in placenta, liver and lung. Expressed in all brain regions.

The protein resides in the cytoplasm. Its subcellular location is the cytosol. The enzyme catalyses L-kynurenine + H2O = anthranilate + L-alanine + H(+). It catalyses the reaction 3-hydroxy-L-kynurenine + H2O = 3-hydroxyanthranilate + L-alanine + H(+). Its pathway is amino-acid degradation; L-kynurenine degradation; L-alanine and anthranilate from L-kynurenine: step 1/1. The protein operates within cofactor biosynthesis; NAD(+) biosynthesis; quinolinate from L-kynurenine: step 2/3. With respect to regulation, inhibited by o-methoxybenzoylalanine (OMBA). Its function is as follows. Catalyzes the cleavage of L-kynurenine (L-Kyn) and L-3-hydroxykynurenine (L-3OHKyn) into anthranilic acid (AA) and 3-hydroxyanthranilic acid (3-OHAA), respectively. Has a preference for the L-3-hydroxy form. Also has cysteine-conjugate-beta-lyase activity. The protein is Kynureninase of Homo sapiens (Human).